Here is a 116-residue protein sequence, read N- to C-terminus: Protein lin-52 homolog (116 aa).

A phosphoserine mark is found at Ser28 and Ser53.

This sequence belongs to the lin-52 family. Component of the DREAM complex (also named LINC complex) at least composed of E2F4, E2F5, LIN9, LIN37, LIN52, LIN54, MYBL1, MYBL2, RBL1, RBL2, RBBP4, TFDP1 and TFDP2. The complex exists in quiescent cells where it represses cell cycle-dependent genes. It dissociates in S phase when LIN9, LIN37, LIN52 and LIN54 form a subcomplex that binds to MYBL2.

This is Protein lin-52 homolog (LIN52) from Homo sapiens (Human).